A 612-amino-acid chain; its full sequence is UvrABC system protein C (612 aa).

The 79-residue stretch at 20–98 (THSGVYRMLD…IKQHRPKYNI (79 aa)) folds into the GIY-YIG domain. Residues 208-243 (SSVLEEISAKMYQASEDMEYEKAQVYRDQLVVLRKL) form the UVR domain.

The protein belongs to the UvrC family. In terms of assembly, interacts with UvrB in an incision complex.

Its subcellular location is the cytoplasm. Functionally, the UvrABC repair system catalyzes the recognition and processing of DNA lesions. UvrC both incises the 5' and 3' sides of the lesion. The N-terminal half is responsible for the 3' incision and the C-terminal half is responsible for the 5' incision. In Francisella tularensis subsp. mediasiatica (strain FSC147), this protein is UvrABC system protein C.